The chain runs to 229 residues: Potassium/proton antiporter CemA (229 aa).

4 helical membrane-spanning segments follow: residues 7–27 (FTPLPYLASIVFLPWWVSLSF), 114–134 (IICFAILSVYSILGNEELVIL), 154–174 (ILLVTDLWIGFHSPHGWELMI), and 189–209 (IISGLVSTFPVILDTIVKYWI).

This sequence belongs to the CemA family.

It localises to the plastid. The protein resides in the chloroplast inner membrane. The catalysed reaction is K(+)(in) + H(+)(out) = K(+)(out) + H(+)(in). Its function is as follows. Contributes to K(+)/H(+) antiport activity by supporting proton efflux to control proton extrusion and homeostasis in chloroplasts in a light-dependent manner to modulate photosynthesis. Prevents excessive induction of non-photochemical quenching (NPQ) under continuous-light conditions. Indirectly promotes efficient inorganic carbon uptake into chloroplasts. The sequence is that of Potassium/proton antiporter CemA from Acorus calamus var. americanus (American sweet flag).